A 271-amino-acid chain; its full sequence is Phosphatidylglycerol--prolipoprotein diacylglyceryl transferase (271 aa).

7 helical membrane passes run valine 10–isoleucine 30, leucine 56–tyrosine 76, tryptophan 92–phenylalanine 112, phenylalanine 120–isoleucine 140, proline 174–phenylalanine 194, methionine 202–valine 222, and leucine 237–leucine 257. Arginine 139 contacts a 1,2-diacyl-sn-glycero-3-phospho-(1'-sn-glycerol).

Belongs to the Lgt family.

It is found in the cell inner membrane. It carries out the reaction L-cysteinyl-[prolipoprotein] + a 1,2-diacyl-sn-glycero-3-phospho-(1'-sn-glycerol) = an S-1,2-diacyl-sn-glyceryl-L-cysteinyl-[prolipoprotein] + sn-glycerol 1-phosphate + H(+). The protein operates within protein modification; lipoprotein biosynthesis (diacylglyceryl transfer). Functionally, catalyzes the transfer of the diacylglyceryl group from phosphatidylglycerol to the sulfhydryl group of the N-terminal cysteine of a prolipoprotein, the first step in the formation of mature lipoproteins. The sequence is that of Phosphatidylglycerol--prolipoprotein diacylglyceryl transferase from Pseudomonas fluorescens (strain Pf0-1).